The primary structure comprises 301 residues: Putative S-adenosyl-L-methionine-dependent methyltransferase MUL_0450 (301 aa).

S-adenosyl-L-methionine-binding positions include D127 and 156-157 (DL).

The protein belongs to the UPF0677 family.

Exhibits S-adenosyl-L-methionine-dependent methyltransferase activity. The sequence is that of Putative S-adenosyl-L-methionine-dependent methyltransferase MUL_0450 from Mycobacterium ulcerans (strain Agy99).